We begin with the raw amino-acid sequence, 450 residues long: Chitobiosyldiphosphodolichol beta-mannosyltransferase (450 aa).

The Lumenal portion of the chain corresponds to 1–13 (MSWIQIPWSWVVT). The helical transmembrane segment at 14-34 (LIVTYLSLPLIIYYLVPYIFY) threads the bilayer. Residues 35–106 (GNKSSKKRII…PTLTLQGNKR (72 aa)) are Cytoplasmic-facing. The segment at residues 107–127 (SIIFLVKKVLFQVSAIIAQLW) is an intramembrane region (helical). At 128–450 (ELRGSNYMLI…SAMQELKLVA (323 aa)) the chain is on the cytoplasmic side.

It belongs to the glycosyltransferase group 1 family.

The protein resides in the endoplasmic reticulum membrane. The catalysed reaction is an N,N'-diacetylchitobiosyl-diphospho-di-trans,poly-cis-dolichol + GDP-alpha-D-mannose = a beta-D-Man-(1-&gt;4)-beta-D-GlcNAc-(1-&gt;4)-alpha-D-GlcNAc-diphospho-di-trans,poly-cis-dolichol + GDP + H(+). Its pathway is protein modification; protein glycosylation. Functionally, participates in the formation of the lipid-linked precursor oligosaccharide for N-glycosylation. Involved in assembling the dolichol-pyrophosphate-GlcNAc(2)-Man(5) intermediate on the cytoplasmic surface of the ER. The polypeptide is Chitobiosyldiphosphodolichol beta-mannosyltransferase (ALG1) (Candida glabrata (strain ATCC 2001 / BCRC 20586 / JCM 3761 / NBRC 0622 / NRRL Y-65 / CBS 138) (Yeast)).